The sequence spans 525 residues: Calcium uptake protein 1 homolog, mitochondrial (525 aa).

The interval 109–146 is disordered; it reads ADAGQRPSSAADVNGEDKSSESESEDSEDEEAGSDLHL. Residues 130–141 are compositionally biased toward acidic residues; that stretch reads SESEDSEDEEAG. 2 consecutive EF-hand domains span residues 268 to 303 and 459 to 494; these read ISRR…VRQQ and LSDH…RVQR. Ca(2+) is bound by residues aspartate 281, asparagine 283, aspartate 285, aspartate 287, glutamate 292, aspartate 472, asparagine 474, aspartate 476, glutamine 478, and glutamate 483.

This sequence belongs to the MICU1 family. MICU1 subfamily.

It is found in the mitochondrion intermembrane space. It localises to the mitochondrion inner membrane. Functionally, calcium sensor of the mitochondrial calcium uniporter (MCU) channel, which senses calcium level via its EF-hand domains. At low calcium levels, MICU1 occludes the pore of the MCU channel, preventing mitochondrial calcium uptake. At higher calcium levels, calcium-binding to MICU1 induces a conformational change that weakens MCU-MICU1 interactions and moves MICU1 away from the pore, allowing calcium permeation through the MCU channel. Also required to protect against manganese toxicity by preventing manganese uptake by MCU. During development, required in alpha/beta or gamma mushroom body neurons to support olfactory intermediate-term memory in the adult. In Drosophila melanogaster (Fruit fly), this protein is Calcium uptake protein 1 homolog, mitochondrial.